The primary structure comprises 234 residues: Venom allergen 3 (234 aa).

The N-terminal stretch at 1 to 22 (MELIVSILWLAITAENLANTLA) is a signal peptide. Cystine bridges form between Cys-26–Cys-41, Cys-31–Cys-125, Cys-52–Cys-118, and Cys-198–Cys-216. One can recognise an SCP domain in the interval 69-218 (VNKHNELRQR…WTKHYLVCNY (150 aa)). Positions 80–99 (ASGKEMRGTNGPQPPAVKMP) are disordered.

It belongs to the CRISP family. Expressed by the venom gland.

It localises to the secreted. This is Venom allergen 3 from Solenopsis invicta (Red imported fire ant).